Reading from the N-terminus, the 723-residue chain is Homeobox protein vnd (723 aa).

Disordered regions lie at residues 1–115 (MTTS…GLAP), 224–307 (AHHG…HHHP), 465–549 (GSSG…RKRR), and 703–723 (HAHA…AWWP). Residues 10–22 (TPSKRDRDRERDN) are compositionally biased toward basic and acidic residues. Positions 23–36 (SSGLGSAGSLPASP) are enriched in low complexity. The span at 37–48 (QSAITVSPSSPA) shows a compositional bias: polar residues. Positions 61–92 (LERKREREDREDREDRKERQERHERDRDHERF) are enriched in basic and acidic residues. The span at 97–111 (STASTTVPTNTSSSS) shows a compositional bias: low complexity. A compositionally biased stretch (basic and acidic residues) spans 226-235 (HGSDLSHHSA). Over residues 237–255 (ESTSGHRGQGSHTSPSALS) the composition is skewed to polar residues. Positions 278–289 (EADHHSTTEHHA) are enriched in basic and acidic residues. The span at 298 to 307 (HPHHQQHHHP) shows a compositional bias: basic residues. Residues 483 to 493 (NNNNNTTNNNN) show a composition bias toward low complexity. Residues 512 to 528 (LNEDGIEEDIDDVDDAD) show a composition bias toward acidic residues. The segment at residues 545-604 (KRKRRVLFTKAQTYELERRFRQQRYLSAPEREHLASLIRLTPTQVKIWFQNHRYKTKRAQ) is a DNA-binding region (homeobox). Residues 703–716 (HAHAHGHGHPHAHA) show a composition bias toward basic residues.

This sequence belongs to the NK-2 homeobox family. In terms of tissue distribution, expressed in the CNS and midgut.

It localises to the nucleus. Functionally, probable transcriptional regulator involved in the regulation of the proneural AS-C genes and the neurogenic genes of the enhancer of split complex. Could specifically activate proneural genes in the ventral-most neuroectoderm. The polypeptide is Homeobox protein vnd (vnd) (Drosophila melanogaster (Fruit fly)).